Reading from the N-terminus, the 133-residue chain is uncharacterized protein (133 aa).

The segment at Val44 to Asn79 is disordered. Over residues Lys63–Asn79 the composition is skewed to polar residues.

Its subcellular location is the plastid. It localises to the chloroplast. This is an uncharacterized protein from Chlorella vulgaris (Green alga).